The chain runs to 130 residues: Small ribosomal subunit protein uS11c (130 aa).

It belongs to the universal ribosomal protein uS11 family. In terms of assembly, part of the 30S ribosomal subunit.

Its subcellular location is the plastid. The protein localises to the chloroplast. This chain is Small ribosomal subunit protein uS11c, found in Porphyra purpurea (Red seaweed).